Consider the following 115-residue polypeptide: Large ribosomal subunit protein uL22 (115 aa).

The protein belongs to the universal ribosomal protein uL22 family. In terms of assembly, part of the 50S ribosomal subunit.

Functionally, this protein binds specifically to 23S rRNA; its binding is stimulated by other ribosomal proteins, e.g. L4, L17, and L20. It is important during the early stages of 50S assembly. It makes multiple contacts with different domains of the 23S rRNA in the assembled 50S subunit and ribosome. In terms of biological role, the globular domain of the protein is located near the polypeptide exit tunnel on the outside of the subunit, while an extended beta-hairpin is found that lines the wall of the exit tunnel in the center of the 70S ribosome. This is Large ribosomal subunit protein uL22 from Thioalkalivibrio sulfidiphilus (strain HL-EbGR7).